The chain runs to 544 residues: Nucleosome assembly protein 1-like 3 (544 aa).

2 disordered regions span residues 1 to 109 (MAEA…LFLD) and 168 to 345 (PTEE…KKED). Low complexity predominate over residues 35-83 (SNSSSSTNSCSSSGSSSSGSSSSSSSSSSSSSSSSSSSSGSSGSSSNGS). Residues 168–192 (PTEEECEWNSEEEFSGDEEMQDDTP) show a composition bias toward acidic residues. Composition is skewed to basic and acidic residues over residues 207–228 (CNEKAEVKEEGTHVPEEVPEAK), 235–277 (PKET…KADS), and 314–332 (PAREAQKRVPETRPEEGVN).

Belongs to the nucleosome assembly protein (NAP) family. Expressed in brain.

It is found in the nucleus. It localises to the cytoplasm. The polypeptide is Nucleosome assembly protein 1-like 3 (Nap1l3) (Mus musculus (Mouse)).